Consider the following 1018-residue polypeptide: Cytadherence high molecular weight protein 1 (1018 aa).

Coiled coils occupy residues 782 to 815 and 849 to 880; these read NRFLLIKKELQAELTRLIEENEQLKAEFLNAKDL and ELVRNIQKAILENESKIKNIQITLKELKAVYK.

Post-translationally, phosphorylated mainly on serine residues.

The protein resides in the cell projection. It localises to the attachment organelle membrane. In terms of biological role, component of the cytoskeleton-like structure which stabilizes the shape of the wall-less Mycoplasma. This cytoskeleton-like network of accessory proteins containing HMW proteins 1 to 5 allows the proper anchoring of cytadhesin proteins in the mycoplasmal membrane at the attachment organelle. The protein is Cytadherence high molecular weight protein 1 (hmw1) of Mycoplasma pneumoniae (strain ATCC 29342 / M129 / Subtype 1) (Mycoplasmoides pneumoniae).